We begin with the raw amino-acid sequence, 400 residues long: Lipid-A-disaccharide synthase (400 aa).

The protein belongs to the LpxB family.

It catalyses the reaction a lipid X + a UDP-2-N,3-O-bis[(3R)-3-hydroxyacyl]-alpha-D-glucosamine = a lipid A disaccharide + UDP + H(+). It functions in the pathway bacterial outer membrane biogenesis; LPS lipid A biosynthesis. Its function is as follows. Condensation of UDP-2,3-diacylglucosamine and 2,3-diacylglucosamine-1-phosphate to form lipid A disaccharide, a precursor of lipid A, a phosphorylated glycolipid that anchors the lipopolysaccharide to the outer membrane of the cell. In Acidobacterium capsulatum (strain ATCC 51196 / DSM 11244 / BCRC 80197 / JCM 7670 / NBRC 15755 / NCIMB 13165 / 161), this protein is Lipid-A-disaccharide synthase.